The primary structure comprises 277 residues: Ethanolamine ammonia-lyase small subunit (277 aa).

Adenosylcob(III)alamin contacts are provided by valine 164, glutamate 185, and cysteine 214.

This sequence belongs to the EutC family. The basic unit is a heterodimer which dimerizes to form tetramers. The heterotetramers trimerize; 6 large subunits form a core ring with 6 small subunits projecting outwards. Adenosylcob(III)alamin serves as cofactor.

Its subcellular location is the bacterial microcompartment. The enzyme catalyses ethanolamine = acetaldehyde + NH4(+). It participates in amine and polyamine degradation; ethanolamine degradation. Its function is as follows. Catalyzes the deamination of various vicinal amino-alcohols to oxo compounds. Allows this organism to utilize ethanolamine as the sole source of nitrogen and carbon in the presence of external vitamin B12. The chain is Ethanolamine ammonia-lyase small subunit from Pseudomonas fluorescens (strain SBW25).